A 211-amino-acid polypeptide reads, in one-letter code: Probable septum site-determining protein MinC (211 aa).

Belongs to the MinC family. As to quaternary structure, interacts with MinD and FtsZ.

Functionally, cell division inhibitor that blocks the formation of polar Z ring septums. Rapidly oscillates between the poles of the cell to destabilize FtsZ filaments that have formed before they mature into polar Z rings. Prevents FtsZ polymerization. This chain is Probable septum site-determining protein MinC, found in Clostridium perfringens (strain 13 / Type A).